A 164-amino-acid polypeptide reads, in one-letter code: Peptidyl-prolyl cis-trans isomerase CYP18-2 (164 aa).

Residues 12-162 enclose the PPIase cyclophilin-type domain; that stretch reads VTLETSMGPF…HEVKILRTKV (151 aa).

It belongs to the cyclophilin-type PPIase family. As to expression, ubiquitous.

It localises to the cytoplasm. The catalysed reaction is [protein]-peptidylproline (omega=180) = [protein]-peptidylproline (omega=0). PPIases accelerate the folding of proteins. It catalyzes the cis-trans isomerization of proline imidic peptide bonds in oligopeptides. This Arabidopsis thaliana (Mouse-ear cress) protein is Peptidyl-prolyl cis-trans isomerase CYP18-2 (CYP18-2).